A 141-amino-acid polypeptide reads, in one-letter code: Albumin-8 (141 aa).

The N-terminal stretch at 1 to 25 is a signal peptide; the sequence is MARFSIVFAAAGVLLLVAMAPVSEA. The propeptide occupies 26–38; the sequence is STTTIITTIIEEN. Intrachain disulfides connect Cys-49-Cys-100, Cys-62-Cys-89, Cys-90-Cys-132, and Cys-102-Cys-139.

Belongs to the 2S seed storage albumins family. As to quaternary structure, heterodimer; disulfide-linked.

Functionally, this is a 2S seed storage protein. In Helianthus annuus (Common sunflower), this protein is Albumin-8.